The chain runs to 75 residues: Putative DNA-directed RNA polymerase subunit omega (75 aa).

The protein belongs to the RNA polymerase subunit omega family.

Its subcellular location is the plastid. It is found in the chloroplast. It carries out the reaction RNA(n) + a ribonucleoside 5'-triphosphate = RNA(n+1) + diphosphate. Functionally, may be involved in RNA polymerase activity. This Pyropia yezoensis (Susabi-nori) protein is Putative DNA-directed RNA polymerase subunit omega.